The chain runs to 187 residues: MNGLFLFCVATTAALAYGSDAPCTNSGGVCQDDHLACHNGHYQSGLCTGGAHRRCCLTSASHTGSFSTGIVSQQCLQCICNVESGCKAIGCHFDVNSDSCGYFQIKEGYWHDCGSPGSSWRSCANDLACASKCVQAYMSRYIGFSGCSHSCESYARIHNGGPAGCKHTNTLGYWSHVHAQGCSHNSK.

The signal sequence occupies residues 1 to 18 (MNGLFLFCVATTAALAYG). The region spanning 68-183 (TGIVSQQCLQ…WSHVHAQGCS (116 aa)) is the I-type lysozyme domain. 6 cysteine pairs are disulfide-bonded: C75/C151, C80/C86, C91/C100, C113/C133, C123/C129, and C147/C165. The Proton donor role is filled by E83. D94 (nucleophile) is an active-site residue. Substrate is bound at residue 106–112 (KEGYWHD). Residues Y137 and 158 to 160 (HNG) contribute to the substrate site.

In terms of tissue distribution, highest levels of expression detected in the digestive glands. Lower levels in the mantle, labial palps, gills and style-midgut sac, and lowest levels detected in the hemocytes. Not detected in the gonads.

It localises to the secreted. The enzyme catalyses Hydrolysis of (1-&gt;4)-beta-linkages between N-acetylmuramic acid and N-acetyl-D-glucosamine residues in a peptidoglycan and between N-acetyl-D-glucosamine residues in chitodextrins.. Has antibacterial activity against the Gram-negative bacterium E.coli. No antibacterial activity detected against the Gram-negative bacterium V.vulnificus. The chain is Lysozyme 3 from Crassostrea virginica (Eastern oyster).